We begin with the raw amino-acid sequence, 1036 residues long: Chitin synthase 1 (1036 aa).

Positions 1–10 are enriched in pro residues; sequence MDGPPSPTRV. Positions 1–153 are disordered; the sequence is MDGPPSPTRV…RRPLPPAPLF (153 aa). N-linked (GlcNAc...) asparagine glycosylation occurs at Asn-38. Over residues 86-108 the composition is skewed to low complexity; the sequence is PSIPLSSSNPRSPIRPSTPSRVS. Asn-179 carries an N-linked (GlcNAc...) asparagine glycan. The interval 189–229 is disordered; sequence RASLKSAHSYTTDSTFTEDDDITNEKLNHYGPAPEGRQDRR. Residues 194 to 203 show a composition bias toward polar residues; it reads SAHSYTTDST. The next 7 membrane-spanning stretches (helical) occupy residues 659 to 679, 699 to 719, 733 to 753, 776 to 796, 808 to 828, 908 to 928, and 945 to 967; these read FISL…FYFV, IFVI…ILSL, TMVT…YIVI, IFTN…LMSF, SAQY…YAFC, YVVA…SEAY, and WSVA…INIV. The tract at residues 994–1019 is disordered; that stretch reads AGLGSGFSESGKTGITSGSGMSGMSL. Low complexity predominate over residues 1001–1019; it reads SESGKTGITSGSGMSGMSL.

This sequence belongs to the chitin synthase family. Class II subfamily.

Its subcellular location is the cell membrane. The enzyme catalyses [(1-&gt;4)-N-acetyl-beta-D-glucosaminyl](n) + UDP-N-acetyl-alpha-D-glucosamine = [(1-&gt;4)-N-acetyl-beta-D-glucosaminyl](n+1) + UDP + H(+). In terms of biological role, polymerizes chitin, a structural polymer of the cell wall and septum, by transferring the sugar moiety of UDP-GlcNAc to the non-reducing end of the growing chitin polymer. CHS1 mainly responsible for normal yeast cell reproductive growth. In Exophiala dermatitidis (strain ATCC 34100 / CBS 525.76 / NIH/UT8656) (Black yeast), this protein is Chitin synthase 1.